The primary structure comprises 953 residues: 26S proteasome non-ATPase regulatory subunit 1 (953 aa).

At M1 the chain carries N-acetylmethionine. T273 carries the post-translational modification Phosphothreonine. Positions 277 to 319 (SVPGSTNTGTVPGPEKDSDSMETEEKTAGAVAGKTPDASPEPK) are disordered. Residues 290-303 (PEKDSDSMETEEKT) show a composition bias toward basic and acidic residues. K310 carries the post-translational modification N6-acetyllysine. At T311 the chain carries Phosphothreonine. S315 carries the post-translational modification Phosphoserine. PC repeat units lie at residues 403–436 (TATA…PGSA), 441–474 (GGLY…DIVR), 476–510 (GGSL…VTGE), 511–545 (AAGL…EKIL), 547–580 (GLAV…ILRR), 581–616 (SGMY…DVRR), 617–649 (AAVE…PHVR), 651–685 (GAAM…YVRQ), 686–726 (GALI…DVMA), and 729–761 (GAIL…PSVV). K720 is modified (N6-acetyllysine). A Phosphothreonine modification is found at T830. The residue at position 834 (S834) is a Phosphoserine. 2 disordered regions span residues 839–881 (AKKK…LDNP) and 930–953 (AHGP…YIDD). Composition is skewed to basic and acidic residues over residues 842–852 (KEKEKEKKEEE) and 859–872 (AEKK…KEPE). The span at 936 to 953 (EEEEQEPEPPEPFEYIDD) shows a compositional bias: acidic residues.

This sequence belongs to the proteasome subunit S1 family. In terms of assembly, component of the 19S proteasome regulatory particle complex. The 26S proteasome consists of a 20S core particle (CP) and two 19S regulatory subunits (RP). The regulatory particle is made of a lid composed of 9 subunits, a base containing 6 ATPases and few additional components including PSMD1. Interacts with ADRM1. Interacts with ZFAND1.

Functionally, component of the 26S proteasome, a multiprotein complex involved in the ATP-dependent degradation of ubiquitinated proteins. This complex plays a key role in the maintenance of protein homeostasis by removing misfolded or damaged proteins, which could impair cellular functions, and by removing proteins whose functions are no longer required. Therefore, the proteasome participates in numerous cellular processes, including cell cycle progression, apoptosis, or DNA damage repair. The sequence is that of 26S proteasome non-ATPase regulatory subunit 1 (Psmd1) from Rattus norvegicus (Rat).